Here is a 1053-residue protein sequence, read N- to C-terminus: CRISPR-associated endonuclease Cas9 (1053 aa).

The interval 1-41 (MKRNYILGLDIGITSVGYGIIDYETRDVIDAGVRLFKEANV) is ruvC-I. The For RuvC-like nuclease domain role is filled by Asp-10. Mg(2+) is bound at residue Asp-10. The tract at residues 41–426 (VENNEGRRSK…IFNRLKLVPK (386 aa)) is recognition lobe. The interval 435 to 481 (EIPTTLVDDFILSPVVKRSFIQSIKVINAIIKKYGLPNDIIIELARE) is ruvC-II. The Mg(2+) site is built by Glu-477 and Glu-481. The HNH Cas9-type domain occupies 480-646 (REKNSKDAQK…VQKDFINRNL (167 aa)). Catalysis depends on His-557, which acts as the Proton acceptor for HNH nuclease domain. A ruvC-III region spans residues 650–775 (RYATRGLMNL…FKDYKYSHRV (126 aa)). His-701 is a Mg(2+) binding site. Tyr-789 is a binding site for RNA. PAM substrate-binding regions lie at residues 882 to 889 (YYGNKLNA) and 985 to 993 (NNDLLNRIE). The segment at 910 to 1053 (KPYRFDVYLD…KKHPQIIKKG (144 aa)) is PAM-interacting domain (PI).

It belongs to the CRISPR-associated Cas9 family. Subtype II-A subfamily. As to quaternary structure, monomer. Binds crRNA and tracrRNA. It depends on Mg(2+) as a cofactor.

In terms of biological role, CRISPR (clustered regularly interspaced short palindromic repeat) is an adaptive immune system that provides protection against mobile genetic elements (viruses, transposable elements and conjugative plasmids). CRISPR clusters contain spacers, sequences complementary to antecedent mobile elements, and target invading nucleic acids. CRISPR clusters are transcribed and processed into CRISPR RNA (crRNA). In type II CRISPR systems correct processing of pre-crRNA requires a trans-encoded small RNA (tracrRNA), endogenous ribonuclease 3 (rnc) and this protein. The tracrRNA serves as a guide for ribonuclease 3-aided processing of pre-crRNA. Subsequently Cas9/crRNA/tracrRNA endonucleolytically cleaves linear or circular dsDNA target complementary to the spacer; Cas9 is inactive in the absence of the 2 guide RNAs (gRNA). Cas9 recognizes the protospacer adjacent motif (PAM) in the CRISPR repeat sequences to help distinguish self versus nonself, as targets within the bacterial CRISPR locus do not have PAMs. PAM recognition is also required for catalytic activity. This Staphylococcus aureus protein is CRISPR-associated endonuclease Cas9.